Consider the following 162-residue polypeptide: NAD(P)H-quinone oxidoreductase subunit N (162 aa).

The protein belongs to the complex I NdhN subunit family. In terms of assembly, NDH-1 can be composed of about 15 different subunits; different subcomplexes with different compositions have been identified which probably have different functions.

It localises to the cellular thylakoid membrane. It carries out the reaction a plastoquinone + NADH + (n+1) H(+)(in) = a plastoquinol + NAD(+) + n H(+)(out). The catalysed reaction is a plastoquinone + NADPH + (n+1) H(+)(in) = a plastoquinol + NADP(+) + n H(+)(out). Its function is as follows. NDH-1 shuttles electrons from an unknown electron donor, via FMN and iron-sulfur (Fe-S) centers, to quinones in the respiratory and/or the photosynthetic chain. The immediate electron acceptor for the enzyme in this species is believed to be plastoquinone. Couples the redox reaction to proton translocation, and thus conserves the redox energy in a proton gradient. Cyanobacterial NDH-1 also plays a role in inorganic carbon-concentration. The sequence is that of NAD(P)H-quinone oxidoreductase subunit N from Trichormus variabilis (strain ATCC 29413 / PCC 7937) (Anabaena variabilis).